A 91-amino-acid chain; its full sequence is Probable Fe(2+)-trafficking protein (91 aa).

Belongs to the Fe(2+)-trafficking protein family. In terms of assembly, monomer.

Its function is as follows. Could be a mediator in iron transactions between iron acquisition and iron-requiring processes, such as synthesis and/or repair of Fe-S clusters in biosynthetic enzymes. This Salmonella agona (strain SL483) protein is Probable Fe(2+)-trafficking protein.